We begin with the raw amino-acid sequence, 904 residues long: Leucine--tRNA ligase (904 aa).

The 'HIGH' region signature appears at 49–59; that stretch reads PYPSGDLHIGH. The short motif at 663–667 is the 'KMSKS' region element; the sequence is TMSKS. Residue K666 coordinates ATP.

This sequence belongs to the class-I aminoacyl-tRNA synthetase family.

The protein localises to the cytoplasm. The enzyme catalyses tRNA(Leu) + L-leucine + ATP = L-leucyl-tRNA(Leu) + AMP + diphosphate. In Roseiflexus castenholzii (strain DSM 13941 / HLO8), this protein is Leucine--tRNA ligase.